Consider the following 442-residue polypeptide: tRNA modification GTPase MnmE (442 aa).

(6S)-5-formyl-5,6,7,8-tetrahydrofolate contacts are provided by R21, E79, and K118. The region spanning 214-367 (GFKIAIVGKP…LKEELQNYLN (154 aa)) is the TrmE-type G domain. Residue N224 participates in K(+) binding. GTP contacts are provided by residues 224-229 (NVGKSS), 243-249 (SDIAGTT), and 268-271 (DTAG). S228 contacts Mg(2+). S243, I245, and T248 together coordinate K(+). Residue T249 coordinates Mg(2+). K442 provides a ligand contact to (6S)-5-formyl-5,6,7,8-tetrahydrofolate.

It belongs to the TRAFAC class TrmE-Era-EngA-EngB-Septin-like GTPase superfamily. TrmE GTPase family. Homodimer. Heterotetramer of two MnmE and two MnmG subunits. K(+) is required as a cofactor.

The protein resides in the cytoplasm. Functionally, exhibits a very high intrinsic GTPase hydrolysis rate. Involved in the addition of a carboxymethylaminomethyl (cmnm) group at the wobble position (U34) of certain tRNAs, forming tRNA-cmnm(5)s(2)U34. This chain is tRNA modification GTPase MnmE, found in Campylobacter jejuni subsp. jejuni serotype O:2 (strain ATCC 700819 / NCTC 11168).